The primary structure comprises 396 residues: Elongation factor Tu (396 aa).

In terms of domain architecture, tr-type G spans 10-206 (KPHVNIGTIG…AVDEYIPTPQ (197 aa)). Residues 19 to 26 (GHVDHGKT) are G1. GTP is bound at residue 19-26 (GHVDHGKT). T26 lines the Mg(2+) pocket. Residues 60-64 (GITIS) are G2. The interval 81 to 84 (DCPG) is G3. Residues 81–85 (DCPGH) and 136–139 (NKVD) each bind GTP. The interval 136 to 139 (NKVD) is G4. The G5 stretch occupies residues 174–176 (SAL).

The protein belongs to the TRAFAC class translation factor GTPase superfamily. Classic translation factor GTPase family. EF-Tu/EF-1A subfamily. As to quaternary structure, monomer.

It is found in the cytoplasm. It carries out the reaction GTP + H2O = GDP + phosphate + H(+). Its function is as follows. GTP hydrolase that promotes the GTP-dependent binding of aminoacyl-tRNA to the A-site of ribosomes during protein biosynthesis. The protein is Elongation factor Tu of Stigmatella aurantiaca.